The primary structure comprises 150 residues: uncharacterized protein (150 aa).

This sequence belongs to the IIV-6 391R family.

This is an uncharacterized protein from Invertebrate iridescent virus 3 (IIV-3).